The following is a 399-amino-acid chain: S-adenosylmethionine synthase (399 aa).

136–141 (GTGSAD) contacts ATP.

It belongs to the AdoMet synthase 2 family. It depends on Mg(2+) as a cofactor.

The enzyme catalyses L-methionine + ATP + H2O = S-adenosyl-L-methionine + phosphate + diphosphate. Its pathway is amino-acid biosynthesis; S-adenosyl-L-methionine biosynthesis; S-adenosyl-L-methionine from L-methionine: step 1/1. In terms of biological role, catalyzes the formation of S-adenosylmethionine from methionine and ATP. The chain is S-adenosylmethionine synthase from Methanothrix thermoacetophila (strain DSM 6194 / JCM 14653 / NBRC 101360 / PT) (Methanosaeta thermophila).